We begin with the raw amino-acid sequence, 338 residues long: Activator of 90 kDa heat shock protein ATPase homolog 1 (338 aa).

Lysine 3 is modified (N6-acetyllysine). Lysine 182 is covalently cross-linked (Glycyl lysine isopeptide (Lys-Gly) (interchain with G-Cter in SUMO1)). Serine 193 carries the phosphoserine modification. A Glycyl lysine isopeptide (Lys-Gly) (interchain with G-Cter in SUMO2) cross-link involves residue lysine 203. At lysine 212 the chain carries N6-acetyllysine. Tyrosine 223 is modified (phosphotyrosine; by ABL). Serine 258 is modified (phosphoserine).

The protein belongs to the AHA1 family. As to quaternary structure, interacts with HSPCA/HSP90. Interacts (phosphorylated on Tyr-223) with HSP90AA1; the interaction activates HSP90AA1 ATPase activity. Interacts with HSP90AB1. Interacts with GCH1. Interacts with SRPK1. Interacts with FLCN. In terms of assembly, (Microbial infection) Interacts with vesicular stomatitis virus glycoprotein (VSV G) (via cytoplasmic tail). In terms of processing, phosphorylation at Tyr-223 enhances binding to chaperone HSP90AA1. In terms of tissue distribution, expressed in numerous tissues, including brain, heart, skeletal muscle and kidney and, at lower levels, liver and placenta.

Its subcellular location is the cytoplasm. It localises to the cytosol. It is found in the endoplasmic reticulum. Functionally, acts as a co-chaperone of HSP90AA1. Activates the ATPase activity of HSP90AA1 leading to increase in its chaperone activity. Competes with the inhibitory co-chaperone FNIP1 for binding to HSP90AA1, thereby providing a reciprocal regulatory mechanism for chaperoning of client proteins. Competes with the inhibitory co-chaperone TSC1 for binding to HSP90AA1, thereby providing a reciprocal regulatory mechanism for chaperoning of client proteins. In Homo sapiens (Human), this protein is Activator of 90 kDa heat shock protein ATPase homolog 1 (AHSA1).